The following is a 446-amino-acid chain: Exodeoxyribonuclease 7 large subunit (446 aa).

Belongs to the XseA family. In terms of assembly, heterooligomer composed of large and small subunits.

It is found in the cytoplasm. The enzyme catalyses Exonucleolytic cleavage in either 5'- to 3'- or 3'- to 5'-direction to yield nucleoside 5'-phosphates.. Bidirectionally degrades single-stranded DNA into large acid-insoluble oligonucleotides, which are then degraded further into small acid-soluble oligonucleotides. This chain is Exodeoxyribonuclease 7 large subunit, found in Acholeplasma laidlawii (strain PG-8A).